The sequence spans 425 residues: Formyl-CoA:oxalate CoA-transferase (425 aa).

Residues 17 to 18 (QS), arginine 38, 72 to 75 (LDTK), 96 to 98 (NFG), arginine 104, and 136 to 139 (KVYE) contribute to the CoA site. Aspartate 168 serves as the catalytic Nucleophile. 247-249 (GGQ) contributes to the substrate binding site.

The protein belongs to the CoA-transferase III family. Frc subfamily. In terms of assembly, homodimer.

The enzyme catalyses formyl-CoA + oxalate = oxalyl-CoA + formate. Its pathway is metabolic intermediate degradation; oxalate degradation; CO(2) and formate from oxalate: step 1/2. Involved in the catabolism of oxalate and in the adapatation to low pH via the induction of the oxalate-dependent acid tolerance response (ATR). Catalyzes the transfer of the CoA moiety from formyl-CoA to oxalate. In Rhodopseudomonas palustris (strain HaA2), this protein is Formyl-CoA:oxalate CoA-transferase.